A 237-amino-acid chain; its full sequence is Large ribosomal subunit protein uL1 (237 aa).

It belongs to the universal ribosomal protein uL1 family. In terms of assembly, part of the 50S ribosomal subunit.

Its function is as follows. Binds directly to 23S rRNA. The L1 stalk is quite mobile in the ribosome, and is involved in E site tRNA release. Protein L1 is also a translational repressor protein, it controls the translation of the L11 operon by binding to its mRNA. In Myxococcus xanthus (strain DK1622), this protein is Large ribosomal subunit protein uL1.